The primary structure comprises 237 residues: MLTRKQYDLLRFIHERLKETGVPPSFDEMKEALDLRSKSGIHRLITALEERGFIRRLPNRARALEVVRLPDSVAPGLATPRSASRGFSPSVIEGSLGKVRPAADDDEGAGQVVTVPVMGRIAAGSPISAIQTRSHTLNIPPEMLGSGEHFALEVRGDSMIEAGILDGDTVLIRKCDTADTGDIIVALVDDEEATLKRLRKKGASIALEAANPAYETRIFGPDRVRIQGRLIGLMRRY.

The H-T-H motif DNA-binding region spans 26–46; sequence FDEMKEALDLRSKSGIHRLIT. Active-site for autocatalytic cleavage activity residues include Ser158 and Lys196.

It belongs to the peptidase S24 family. Homodimer.

The enzyme catalyses Hydrolysis of Ala-|-Gly bond in repressor LexA.. Its function is as follows. Represses a number of genes involved in the response to DNA damage (SOS response), including recA and lexA. In the presence of single-stranded DNA, RecA interacts with LexA causing an autocatalytic cleavage which disrupts the DNA-binding part of LexA, leading to derepression of the SOS regulon and eventually DNA repair. The polypeptide is LexA repressor (Xanthobacter autotrophicus (strain ATCC BAA-1158 / Py2)).